The following is a 203-amino-acid chain: ATP-dependent Clp protease proteolytic subunit (203 aa).

Residue serine 101 is the Nucleophile of the active site. Histidine 126 is an active-site residue.

It belongs to the peptidase S14 family. In terms of assembly, component of the chloroplastic Clp protease core complex.

Its subcellular location is the plastid. It localises to the chloroplast stroma. It carries out the reaction Hydrolysis of proteins to small peptides in the presence of ATP and magnesium. alpha-casein is the usual test substrate. In the absence of ATP, only oligopeptides shorter than five residues are hydrolyzed (such as succinyl-Leu-Tyr-|-NHMec, and Leu-Tyr-Leu-|-Tyr-Trp, in which cleavage of the -Tyr-|-Leu- and -Tyr-|-Trp bonds also occurs).. Its function is as follows. Cleaves peptides in various proteins in a process that requires ATP hydrolysis. Has a chymotrypsin-like activity. Plays a major role in the degradation of misfolded proteins. The polypeptide is ATP-dependent Clp protease proteolytic subunit (Marchantia polymorpha (Common liverwort)).